The primary structure comprises 46 residues: Short transmembrane mitochondrial protein 1 (46 aa).

A helical membrane pass occupies residues 7 to 23 (GFTLGNVVGMYLAQNYE).

The protein belongs to the STMP1 family. As to expression, widely expressed. Expressed more abundantly in brain compared with other tissues such as heart, muscle and liver.

It is found in the mitochondrion inner membrane. The protein resides in the mitochondrion outer membrane. The protein localises to the mitochondrion intermembrane space. Microprotein involved in mitochondrial respiratory chain complex III (ubiquinol-cytochrome c oxidoreductase) and complex IV (mitochondrial cytochrome c oxidase complex) assembly. Required for the formation of mitochondrial supercomplexes (SCs). Also required for the activation of the NLRP3 inflammasome. This is Short transmembrane mitochondrial protein 1 from Danio rerio (Zebrafish).